The sequence spans 257 residues: MLLGVNIDHIAVLRQARMVNDPDLLEAAFIVARHGDQITLHVREDRRHAQDFDLENIIKFCKSPVNLECALNDEILNLALKLKPHRVTLVPEKREELTTEGGLCLNHAKLKQSIEKLHNANIEVSLFINPSLEDIEKSKILKAQFIELHTGHYANLHNALFSNISHTAFALKELNQDKKTLQAQFEKELQNLELCAKKGLELGLKVAAGHGLNYKNVKPVVKIKEICELNIGQSIVARSVFTGLQNAILEMKELIKR.

Asn-6 is a 3-amino-2-oxopropyl phosphate binding site. A 1-deoxy-D-xylulose 5-phosphate-binding site is contributed by Asp-8 to His-9. Arg-17 lines the 3-amino-2-oxopropyl phosphate pocket. His-41 (proton acceptor) is an active-site residue. 1-deoxy-D-xylulose 5-phosphate contacts are provided by Arg-43 and His-48. Residue Glu-68 is the Proton acceptor of the active site. Thr-98 serves as a coordination point for 1-deoxy-D-xylulose 5-phosphate. His-210 functions as the Proton donor in the catalytic mechanism. Residues Gly-211 and Gly-232 to Gln-233 each bind 3-amino-2-oxopropyl phosphate.

It belongs to the PNP synthase family. In terms of assembly, homooctamer; tetramer of dimers.

The protein resides in the cytoplasm. It catalyses the reaction 3-amino-2-oxopropyl phosphate + 1-deoxy-D-xylulose 5-phosphate = pyridoxine 5'-phosphate + phosphate + 2 H2O + H(+). Its pathway is cofactor biosynthesis; pyridoxine 5'-phosphate biosynthesis; pyridoxine 5'-phosphate from D-erythrose 4-phosphate: step 5/5. Functionally, catalyzes the complicated ring closure reaction between the two acyclic compounds 1-deoxy-D-xylulose-5-phosphate (DXP) and 3-amino-2-oxopropyl phosphate (1-amino-acetone-3-phosphate or AAP) to form pyridoxine 5'-phosphate (PNP) and inorganic phosphate. The sequence is that of Pyridoxine 5'-phosphate synthase from Campylobacter jejuni (strain RM1221).